The sequence spans 210 residues: Protein GrpE (210 aa).

The segment at 1–71 (MSEKDQSVNN…DTKIKELEKL (71 aa)) is disordered. Residues 11 to 23 (TEEDFNVETEDNQ) are compositionally biased toward acidic residues. The segment covering 24–35 (NDTNIENSVSNT) has biased composition (polar residues). Low complexity predominate over residues 36-46 (DNSEANASDSE). Positions 47–60 (NNSEESIKDEESES) are enriched in acidic residues. The segment covering 61–71 (QDTKIKELEKL) has biased composition (basic and acidic residues).

This sequence belongs to the GrpE family. In terms of assembly, homodimer.

The protein resides in the cytoplasm. In terms of biological role, participates actively in the response to hyperosmotic and heat shock by preventing the aggregation of stress-denatured proteins, in association with DnaK and GrpE. It is the nucleotide exchange factor for DnaK and may function as a thermosensor. Unfolded proteins bind initially to DnaJ; upon interaction with the DnaJ-bound protein, DnaK hydrolyzes its bound ATP, resulting in the formation of a stable complex. GrpE releases ADP from DnaK; ATP binding to DnaK triggers the release of the substrate protein, thus completing the reaction cycle. Several rounds of ATP-dependent interactions between DnaJ, DnaK and GrpE are required for fully efficient folding. The protein is Protein GrpE of Staphylococcus epidermidis (strain ATCC 35984 / DSM 28319 / BCRC 17069 / CCUG 31568 / BM 3577 / RP62A).